The following is a 180-amino-acid chain: Ribosome rescue factor SmrB (180 aa).

The Smr domain maps to 98-173 (LDLHGLTQLQ…GNAALLVLVA (76 aa)).

Belongs to the SmrB family. As to quaternary structure, associates with collided ribosomes, but not with correctly translating polysomes.

Its function is as follows. Acts as a ribosome collision sensor. Detects stalled/collided disomes (pairs of ribosomes where the leading ribosome is stalled and a second ribosome has collided with it) and endonucleolytically cleaves mRNA at the 5' boundary of the stalled ribosome. Stalled/collided disomes form a new interface (primarily via the 30S subunits) that binds SmrB. Cleaved mRNA becomes available for tmRNA ligation, leading to ribosomal subunit dissociation and rescue of stalled ribosomes. This is Ribosome rescue factor SmrB from Pectobacterium carotovorum subsp. carotovorum (strain PC1).